We begin with the raw amino-acid sequence, 625 residues long: Glutamine--fructose-6-phosphate aminotransferase [isomerizing] (625 aa).

Catalysis depends on cysteine 2, which acts as the Nucleophile; for GATase activity. Residues 2–229 (CGIVGFVGRT…NDQIVTITAD (228 aa)) form the Glutamine amidotransferase type-2 domain. SIS domains follow at residues 296 to 436 (IDES…LRGN) and 470 to 615 (LAQD…VDQP). The active-site For Fru-6P isomerization activity is lysine 620.

Homodimer.

The protein localises to the cytoplasm. It catalyses the reaction D-fructose 6-phosphate + L-glutamine = D-glucosamine 6-phosphate + L-glutamate. Its function is as follows. Catalyzes the first step in hexosamine metabolism, converting fructose-6P into glucosamine-6P using glutamine as a nitrogen source. This chain is Glutamine--fructose-6-phosphate aminotransferase [isomerizing], found in Corynebacterium diphtheriae (strain ATCC 700971 / NCTC 13129 / Biotype gravis).